Reading from the N-terminus, the 272-residue chain is 3-methyl-2-oxobutanoate hydroxymethyltransferase (272 aa).

Positions 51 and 90 each coordinate Mg(2+). Residues 51–52 (DS), Asp-90, and Lys-118 contribute to the 3-methyl-2-oxobutanoate site. Glu-120 serves as a coordination point for Mg(2+). The active-site Proton acceptor is Glu-187.

This sequence belongs to the PanB family. As to quaternary structure, homodecamer; pentamer of dimers. Mg(2+) serves as cofactor.

The protein resides in the cytoplasm. The enzyme catalyses 3-methyl-2-oxobutanoate + (6R)-5,10-methylene-5,6,7,8-tetrahydrofolate + H2O = 2-dehydropantoate + (6S)-5,6,7,8-tetrahydrofolate. It participates in cofactor biosynthesis; (R)-pantothenate biosynthesis; (R)-pantoate from 3-methyl-2-oxobutanoate: step 1/2. Functionally, catalyzes the reversible reaction in which hydroxymethyl group from 5,10-methylenetetrahydrofolate is transferred onto alpha-ketoisovalerate to form ketopantoate. The protein is 3-methyl-2-oxobutanoate hydroxymethyltransferase of Xylella fastidiosa (strain M12).